A 339-amino-acid polypeptide reads, in one-letter code: GTPase Obg (339 aa).

The Obg domain maps to 1-159 (MKFVDEAFVR…RELKLELKLL (159 aa)). The OBG-type G domain occupies 160 to 333 (ADVGLLGLPN…LCYDLMSFLE (174 aa)). Residues 166 to 173 (GLPNAGKS), 191 to 195 (FTTLY), 213 to 216 (DIPG), 283 to 286 (NKID), and 314 to 316 (SAI) contribute to the GTP site. Residues serine 173 and threonine 193 each contribute to the Mg(2+) site.

The protein belongs to the TRAFAC class OBG-HflX-like GTPase superfamily. OBG GTPase family. As to quaternary structure, monomer. The cofactor is Mg(2+).

Its subcellular location is the cytoplasm. An essential GTPase which binds GTP, GDP and possibly (p)ppGpp with moderate affinity, with high nucleotide exchange rates and a fairly low GTP hydrolysis rate. Plays a role in control of the cell cycle, stress response, ribosome biogenesis and in those bacteria that undergo differentiation, in morphogenesis control. The chain is GTPase Obg from Coxiella burnetii (strain RSA 331 / Henzerling II).